The chain runs to 51 residues: Large ribosomal subunit protein eL39 (51 aa).

It belongs to the eukaryotic ribosomal protein eL39 family.

This Saccharolobus islandicus (strain Y.N.15.51 / Yellowstone #2) (Sulfolobus islandicus) protein is Large ribosomal subunit protein eL39.